Consider the following 90-residue polypeptide: Albumin-1 (90 aa).

Residue Ala-1 is a signal peptide. Cystine bridges form between Cys-4–Cys-21, Cys-8–Cys-23, and Cys-16–Cys-34. Residues 40-47 constitute a propeptide that is removed on maturation; it reads LSSVAKMI.

In terms of processing, the C-terminal glycine may be removed from A1b.

Its function is as follows. A1b binds to basic 7S globulin (BG) and stimulates its phosphorylation activity. The polypeptide is Albumin-1 (LEG) (Phaseolus angularis (Azuki bean)).